Consider the following 127-residue polypeptide: Putative pre-16S rRNA nuclease (127 aa).

Belongs to the YqgF nuclease family.

It is found in the cytoplasm. Functionally, could be a nuclease involved in processing of the 5'-end of pre-16S rRNA. The sequence is that of Putative pre-16S rRNA nuclease from Campylobacter jejuni subsp. jejuni serotype O:6 (strain 81116 / NCTC 11828).